The chain runs to 929 residues: MELRKIVPNLLVLYVAVHFSQSSEIKVINVLELHDVRQTAAAIENLSGALQTVGDLYITSTFMLPPKLGGVLFGLYDKQDNKKYLEIAVVGKINKLLVRYLRSDGKAHTVNLQNPALAEGRTQSLILRIGGLRRSHINLELYVNCRLVDSAQGLPSFVGLPSEAESVDVRTGQKSYARIQGLVESVKLALGGSLATAGLLIDCPFQGDSAINNAVVSDINAILGDHTKALIGQLIIFNQIMGELREDIREQTKEMSLIRNTILECQVCGFHEPQSRCLPNPCYTGVSCMESMMYPGYQCGPCPEELCVNTAKGFSCQSCPIGFTGPTLKGVGLEFAKRHKQHCVDIDECAELSGSCVPNSVCINTVGSFKCGQCKAGFVGNQTVGCFARRTCETLGYSPCDVNSHCVMGRNSDVSCVCNVGWAGNGNICGPDSDIDGYPDEPLPCMDNDKHCRADNCANTPNSGQEDTDGDGIGDQCDEDADGDGIKNVEDNCRLVPNKDQQNSDTDSYGDACDNCPNVPNGDQLDTDGNGKGDICDTDIDGDGIPNVLDNCPKIPNPMQTDRDGDGVGDACDSCPEVNDPLQSDMDNDLVGDVCDTNKDIDGDGYQDTRDNCPEVPNSSQLDSDNDGIGDECDDDDDNDGIPDILPPGPDNCRLVPNPSQIDTDANGVGDVCETDFDNDKVTDLLDACPESAEVTMTDFRAFQTVILDPEGDAQIDPNWVVLNQGMEIVQTMNSDPGLAVGYTAFNGVDFEGTIHVNTATDDDYVGFIFGYQDSSSFYVVMWKQTEQTYWQNLPFKALAQPGIQLKAVKSRTGPGEYLRNALWHTGDTTGEVTLLWKDPRNVGWKDRASYRWHLSHRPQVGYIRLRLYEGTALVADSGVVIDSTMRGGRLGVFCFSQENVIWSNLGYRCNDSIPDDFMLYHKQMKLRT.

The first 22 residues, 1-22 (MELRKIVPNLLVLYVAVHFSQS), serve as a signal peptide directing secretion. One can recognise a Laminin G-like domain in the interval 24–192 (EIKVINVLEL…VESVKLALGG (169 aa)). N-linked (GlcNAc...) asparagine glycosylation occurs at Asn-45. Cystine bridges form between Cys-277/Cys-288, Cys-282/Cys-299, Cys-319/Cys-343, Cys-349/Cys-362, Cys-356/Cys-371, Cys-374/Cys-386, Cys-392/Cys-406, Cys-400/Cys-416, Cys-418/Cys-429, Cys-445/Cys-452, Cys-457/Cys-477, Cys-493/Cys-513, Cys-516/Cys-536, Cys-552/Cys-572, Cys-575/Cys-595, Cys-613/Cys-633, Cys-653/Cys-673, and Cys-689/Cys-910. Residues 345-384 (DIDECAELSGSCVPNSVCINTVGSFKCGQCKAGFVGNQTV) form the EGF-like 1; calcium-binding domain. An N-linked (GlcNAc...) asparagine glycan is attached at Asn-381. The 43-residue stretch at 388-430 (ARRTCETLGYSPCDVNSHCVMGRNSDVSCVCNVGWAGNGNICG) folds into the EGF-like 2 domain. TSP type-3 repeat units follow at residues 431-465 (PDSD…NSGQ), 466-501 (EDTD…NKDQ), 502-524 (QNSD…NGDQ), 525-560 (LDTD…NPMQ), 561-583 (TDRD…DPLQ), 584-621 (SDMD…NSSQ), 622-661 (LDSD…NPSQ), and 662-697 (IDTD…EVTM). The span at 602–613 (DGDGYQDTRDNC) shows a compositional bias: basic and acidic residues. Positions 602–651 (DGDGYQDTRDNCPEVPNSSQLDSDNDGIGDECDDDDDNDGIPDILPPGPD) are disordered. Asn-618 is a glycosylation site (N-linked (GlcNAc...) asparagine). Residues 624-641 (SDNDGIGDECDDDDDNDG) show a composition bias toward acidic residues. The 215-residue stretch at 701 to 915 (RAFQTVILDP…LGYRCNDSIP (215 aa)) folds into the TSP C-terminal domain. The N-linked (GlcNAc...) asparagine glycan is linked to Asn-911.

Belongs to the thrombospondin family. In terms of assembly, oligomer; disulfide-linked.

Its function is as follows. Adhesive glycoprotein that mediates cell-to-cell and cell-to-matrix interactions. Can bind to fibrinogen, fibronectin, laminin and type V collagen. This is Thrombospondin-3b from Danio rerio (Zebrafish).